The following is a 524-amino-acid chain: Nickel-binding periplasmic protein (524 aa).

The N-terminal stretch at 1 to 22 is a signal peptide; that stretch reads MLSTLRRTLFALLACASFIVHA.

It belongs to the bacterial solute-binding protein 5 family.

The protein localises to the periplasm. In terms of biological role, involved in a nickel transport system, probably represents the nickel binder. This is Nickel-binding periplasmic protein (nikA) from Escherichia coli (strain K12).